The following is a 227-amino-acid chain: Cytochrome c oxidase subunit 2 (227 aa).

Topologically, residues 1-14 are mitochondrial intermembrane; sequence MAYPHQLGFQDATS. A helical membrane pass occupies residues 15-45; it reads PIMEELLSFHDHTLMIVFLISSLVLYLISLM. At 46-59 the chain is on the mitochondrial matrix side; sequence LTTKLTHTSTMDAQ. Residues 60-87 form a helical membrane-spanning segment; that stretch reads EVETVWTILPAIILIMIALPSLRILYMM. The Mitochondrial intermembrane portion of the chain corresponds to 88–227; it reads DEINNPLLTV…SFENWTTSMT (140 aa). Positions 161, 196, 198, 200, 204, and 207 each coordinate Cu cation. Residue Glu-198 participates in Mg(2+) binding.

It belongs to the cytochrome c oxidase subunit 2 family. Component of the cytochrome c oxidase (complex IV, CIV), a multisubunit enzyme composed of 14 subunits. The complex is composed of a catalytic core of 3 subunits MT-CO1, MT-CO2 and MT-CO3, encoded in the mitochondrial DNA, and 11 supernumerary subunits COX4I, COX5A, COX5B, COX6A, COX6B, COX6C, COX7A, COX7B, COX7C, COX8 and NDUFA4, which are encoded in the nuclear genome. The complex exists as a monomer or a dimer and forms supercomplexes (SCs) in the inner mitochondrial membrane with NADH-ubiquinone oxidoreductase (complex I, CI) and ubiquinol-cytochrome c oxidoreductase (cytochrome b-c1 complex, complex III, CIII), resulting in different assemblies (supercomplex SCI(1)III(2)IV(1) and megacomplex MCI(2)III(2)IV(2)). Found in a complex with TMEM177, COA6, COX18, COX20, SCO1 and SCO2. Interacts with TMEM177 in a COX20-dependent manner. Interacts with COX20. Interacts with COX16. Cu cation serves as cofactor.

It localises to the mitochondrion inner membrane. It catalyses the reaction 4 Fe(II)-[cytochrome c] + O2 + 8 H(+)(in) = 4 Fe(III)-[cytochrome c] + 2 H2O + 4 H(+)(out). In terms of biological role, component of the cytochrome c oxidase, the last enzyme in the mitochondrial electron transport chain which drives oxidative phosphorylation. The respiratory chain contains 3 multisubunit complexes succinate dehydrogenase (complex II, CII), ubiquinol-cytochrome c oxidoreductase (cytochrome b-c1 complex, complex III, CIII) and cytochrome c oxidase (complex IV, CIV), that cooperate to transfer electrons derived from NADH and succinate to molecular oxygen, creating an electrochemical gradient over the inner membrane that drives transmembrane transport and the ATP synthase. Cytochrome c oxidase is the component of the respiratory chain that catalyzes the reduction of oxygen to water. Electrons originating from reduced cytochrome c in the intermembrane space (IMS) are transferred via the dinuclear copper A center (CU(A)) of subunit 2 and heme A of subunit 1 to the active site in subunit 1, a binuclear center (BNC) formed by heme A3 and copper B (CU(B)). The BNC reduces molecular oxygen to 2 water molecules using 4 electrons from cytochrome c in the IMS and 4 protons from the mitochondrial matrix. This is Cytochrome c oxidase subunit 2 (MT-CO2) from Georychus capensis (Cape mole rat).